Here is a 293-residue protein sequence, read N- to C-terminus: ATP phosphoribosyltransferase (293 aa).

It belongs to the ATP phosphoribosyltransferase family. Long subfamily. The cofactor is Mg(2+).

It localises to the cytoplasm. The enzyme catalyses 1-(5-phospho-beta-D-ribosyl)-ATP + diphosphate = 5-phospho-alpha-D-ribose 1-diphosphate + ATP. It participates in amino-acid biosynthesis; L-histidine biosynthesis; L-histidine from 5-phospho-alpha-D-ribose 1-diphosphate: step 1/9. With respect to regulation, feedback inhibited by histidine. Functionally, catalyzes the condensation of ATP and 5-phosphoribose 1-diphosphate to form N'-(5'-phosphoribosyl)-ATP (PR-ATP). Has a crucial role in the pathway because the rate of histidine biosynthesis seems to be controlled primarily by regulation of HisG enzymatic activity. This Nitratidesulfovibrio vulgaris (strain ATCC 29579 / DSM 644 / CCUG 34227 / NCIMB 8303 / VKM B-1760 / Hildenborough) (Desulfovibrio vulgaris) protein is ATP phosphoribosyltransferase.